Reading from the N-terminus, the 302-residue chain is GTPase Era (302 aa).

The Era-type G domain maps to 9 to 177 (YCGFIAIVGR…EKIVRQSLRE (169 aa)). The tract at residues 17-24 (GRPNVGKS) is G1. 17–24 (GRPNVGKS) is a GTP binding site. Positions 43 to 47 (QTTRH) are G2. The tract at residues 64–67 (DTPG) is G3. GTP-binding positions include 64 to 68 (DTPGL) and 126 to 129 (NKVD). The tract at residues 126 to 129 (NKVD) is G4. The tract at residues 156–158 (ISA) is G5. One can recognise a KH type-2 domain in the interval 208–285 (TGEELPYSVT…HLELWVKVKS (78 aa)).

The protein belongs to the TRAFAC class TrmE-Era-EngA-EngB-Septin-like GTPase superfamily. Era GTPase family. Monomer.

Its subcellular location is the cytoplasm. It localises to the cell inner membrane. An essential GTPase that binds both GDP and GTP, with rapid nucleotide exchange. Plays a role in 16S rRNA processing and 30S ribosomal subunit biogenesis and possibly also in cell cycle regulation and energy metabolism. This Haemophilus influenzae (strain PittGG) protein is GTPase Era.